Consider the following 513-residue polypeptide: Lysine--tRNA ligase (513 aa).

Glu-422 and Glu-429 together coordinate Mg(2+).

The protein belongs to the class-II aminoacyl-tRNA synthetase family. In terms of assembly, homodimer. It depends on Mg(2+) as a cofactor.

Its subcellular location is the cytoplasm. The enzyme catalyses tRNA(Lys) + L-lysine + ATP = L-lysyl-tRNA(Lys) + AMP + diphosphate. This Tolumonas auensis (strain DSM 9187 / NBRC 110442 / TA 4) protein is Lysine--tRNA ligase.